A 498-amino-acid chain; its full sequence is ATP synthase subunit beta, chloroplastic (498 aa).

172–179 (GGAGVGKT) contacts ATP.

It belongs to the ATPase alpha/beta chains family. F-type ATPases have 2 components, CF(1) - the catalytic core - and CF(0) - the membrane proton channel. CF(1) has five subunits: alpha(3), beta(3), gamma(1), delta(1), epsilon(1). CF(0) has four main subunits: a(1), b(1), b'(1) and c(9-12).

The protein resides in the plastid. Its subcellular location is the chloroplast thylakoid membrane. The enzyme catalyses ATP + H2O + 4 H(+)(in) = ADP + phosphate + 5 H(+)(out). Produces ATP from ADP in the presence of a proton gradient across the membrane. The catalytic sites are hosted primarily by the beta subunits. The polypeptide is ATP synthase subunit beta, chloroplastic (Populus alba (White poplar)).